The chain runs to 188 residues: MKQPNKAPRANIAAPKGTATPKRRRKTRDELDAEARDRKRQKKHSGNRSGARTNVEGSNKKGHSQTQEKDPRVGSKVPVPLVIESQVKAKSMPKPVEKNVVKPRLTPEEELAKLENDERLDALLDRLDNDEVLNKEDQAYVDLTLDRIDALMEQLGIELGDDEDDVEREEKQEDILQLLKRGNPKDTF.

Disordered regions lie at residues 1–80 and 162–188; these read MKQP…VPVP and DEDDVEREEKQEDILQLLKRGNPKDTF. Basic and acidic residues predominate over residues 27-37; the sequence is TRDELDAEARD. Positions 47-57 are enriched in polar residues; it reads NRSGARTNVEG.

The protein belongs to the YihI family. Interacts with Der.

Its function is as follows. A GTPase-activating protein (GAP) that modifies Der/EngA GTPase function. May play a role in ribosome biogenesis. The chain is Der GTPase-activating protein YihI from Yersinia pseudotuberculosis serotype O:1b (strain IP 31758).